Reading from the N-terminus, the 352-residue chain is C-C chemokine receptor type 5 (352 aa).

Residues 1-30 are Extracellular-facing; that stretch reads MDYQVSSPTYDIDYYTSEPCQKINVKQIAA. Sulfotyrosine is present on tyrosine 3. O-linked (GalNAc...) serine glycans are attached at residues serine 6 and serine 7. Sulfotyrosine occurs at positions 10, 14, and 15. Cystine bridges form between cysteine 20/cysteine 269 and cysteine 101/cysteine 178. Residues 31 to 58 form a helical membrane-spanning segment; that stretch reads RLLPPLYSLVFIFGFVGNMLVILILINC. Topologically, residues 59–68 are cytoplasmic; sequence KRLKSMTDIY. Residues 69-89 form a helical membrane-spanning segment; sequence LLNLAISDLFFLLTVPFWAHY. Topologically, residues 90–102 are extracellular; sequence AAAQWDFGNTMCQ. A helical membrane pass occupies residues 103 to 124; the sequence is LLTGLYFIGFFSGIFFIILLTI. The Cytoplasmic portion of the chain corresponds to 125 to 141; it reads DRYLAIVHAVFALKART. The helical transmembrane segment at 142-166 threads the bilayer; it reads VTFGVVTSVITWVVAVFASLPGIIF. Residues 167-198 are Extracellular-facing; the sequence is TRSQKEGLHYTCSSHFPYSQYQFWKNFQTLKI. Residues 199-218 traverse the membrane as a helical segment; the sequence is VILGLVLPLLVMVICYSGIL. At 219–235 the chain is on the cytoplasmic side; it reads KTLLRCRNEKKRHRAVR. The chain crosses the membrane as a helical span at residues 236 to 260; sequence LIFTIMIVYFLFWAPYNIVLLLNTF. The Extracellular segment spans residues 261-277; that stretch reads QEFFGLNNCSSSNRLDQ. Residues 278-301 traverse the membrane as a helical segment; it reads AMQVTETLGMTHCCINPIIYAFVG. The Cytoplasmic portion of the chain corresponds to 302-352; sequence EKFRNYLLVFFQKHIAKHFCKCCSIFQQEAPERASSVYTRSTGEQEISVGL. 3 S-palmitoyl cysteine lipidation sites follow: cysteine 321, cysteine 323, and cysteine 324. Phosphoserine; by BARK1 is present on residues serine 336, serine 337, serine 342, and serine 349.

Belongs to the G-protein coupled receptor 1 family. In terms of assembly, interacts with PRAF2. Efficient ligand binding to CCL3/MIP-1alpha and CCL4/MIP-1beta requires sulfation, O-glycosylation and sialic acid modifications. Glycosylation on Ser-6 is required for efficient binding of CCL4. Interacts with GRK2. Interacts with ARRB1 and ARRB2. Interacts with CNIH4. Interacts with S100A4; this interaction stimulates T-lymphocyte chemotaxis. In terms of processing, sulfated on at least 2 of the N-terminal tyrosines. Sulfation is required for efficient binding of the chemokines, CCL3 and CCL4. Post-translationally, palmitoylation in the C-terminal is important for cell surface expression. Phosphorylation on serine residues in the C-terminal is stimulated by binding CC chemokines especially by APO-RANTES. In terms of processing, O-glycosylated, but not N-glycosylated. Ser-6 appears to be the major site even if Ser-7 may be also O-glycosylated. Also sialylated glycans present which contribute to chemokine binding. Thr-16 and Ser-17 may also be glycosylated and, if so, with small moieties such as a T-antigen.

The protein resides in the cell membrane. Receptor for a number of inflammatory CC-chemokines including CCL3/MIP-1-alpha, CCL4/MIP-1-beta and RANTES and subsequently transduces a signal by increasing the intracellular calcium ion level. May play a role in the control of granulocytic lineage proliferation or differentiation. Participates in T-lymphocyte migration to the infection site by acting as a chemotactic receptor. The polypeptide is C-C chemokine receptor type 5 (CCR5) (Symphalangus syndactylus (Siamang)).